The chain runs to 290 residues: 4-hydroxybenzoate octaprenyltransferase (290 aa).

9 helical membrane-spanning segments follow: residues 20-40 (IGIL…AEGV), 43-63 (LDIL…GCVV), 92-112 (EALL…QPLN), 114-131 (LTIE…SYPF), 135-155 (FFAM…PMAF), 160-180 (GEVP…VIAY), 209-229 (VVGV…IGLL), 231-251 (NLGV…LYQY), and 266-286 (FLHN…DYLV).

It belongs to the UbiA prenyltransferase family. It depends on Mg(2+) as a cofactor.

Its subcellular location is the cell inner membrane. The enzyme catalyses all-trans-octaprenyl diphosphate + 4-hydroxybenzoate = 4-hydroxy-3-(all-trans-octaprenyl)benzoate + diphosphate. The protein operates within cofactor biosynthesis; ubiquinone biosynthesis. Catalyzes the prenylation of para-hydroxybenzoate (PHB) with an all-trans polyprenyl group. Mediates the second step in the final reaction sequence of ubiquinone-8 (UQ-8) biosynthesis, which is the condensation of the polyisoprenoid side chain with PHB, generating the first membrane-bound Q intermediate 3-octaprenyl-4-hydroxybenzoate. This is 4-hydroxybenzoate octaprenyltransferase from Nitrosospira multiformis (strain ATCC 25196 / NCIMB 11849 / C 71).